Reading from the N-terminus, the 465-residue chain is Adenosylhomocysteinase (465 aa).

Residues threonine 56, aspartate 131, and glutamate 191 each contribute to the substrate site. 192–194 (TTT) provides a ligand contact to NAD(+). The substrate site is built by lysine 221 and aspartate 225. NAD(+)-binding positions include asparagine 226, 255 to 260 (GYGDVG), glutamate 278, asparagine 313, 334 to 336 (IGH), and asparagine 379.

This sequence belongs to the adenosylhomocysteinase family. Requires NAD(+) as cofactor.

It is found in the cytoplasm. It carries out the reaction S-adenosyl-L-homocysteine + H2O = L-homocysteine + adenosine. Its pathway is amino-acid biosynthesis; L-homocysteine biosynthesis; L-homocysteine from S-adenosyl-L-homocysteine: step 1/1. May play a key role in the regulation of the intracellular concentration of adenosylhomocysteine. In Chelativorans sp. (strain BNC1), this protein is Adenosylhomocysteinase.